The primary structure comprises 1885 residues: RNA-directed RNA polymerase (1885 aa).

An Alphavirus-like MT domain is found at 63–239; the sequence is SPFAYVNHSH…GFLLSSSSIL (177 aa). Residues 607–635 are compositionally biased toward basic and acidic residues; that stretch reads QKEKNLGQEASKGKGIEQEERRKSDEAKF. The interval 607-639 is disordered; it reads QKEKNLGQEASKGKGIEQEERRKSDEAKFDSGP. Residues 748-836 form the Fe2OG dioxygenase domain; sequence NFNSALIQVY…RTSVTLRVHK (89 aa). A (+)RNA virus helicase ATP-binding domain is found at 1027–1192; sequence MSMIKGKSEE…RLFKDGVNYK (166 aa). Residue 1060–1067 participates in ATP binding; sequence GFAGSGKS. The (+)RNA virus helicase C-terminal domain occupies 1193–1337; the sequence is WYSYRINKFI…CSGIGASKEF (145 aa). Residues 1634–1741 form the RdRp catalytic domain; sequence SMCVESDYTA…LRNLREIDTH (108 aa).

The enzyme catalyses RNA(n) + a ribonucleoside 5'-triphosphate = RNA(n+1) + diphosphate. Its function is as follows. Involved in viral RNA replication. The chain is RNA-directed RNA polymerase from Crataegus (hawthorn).